Here is a 699-residue protein sequence, read N- to C-terminus: Elongation factor G (699 aa).

Positions 8–290 (ERYRNIGIMA…GVIEYLPSPV (283 aa)) constitute a tr-type G domain. Residues 17–24 (AHIDAGKT), 88–92 (DTPGH), and 142–145 (NKMD) each bind GTP.

This sequence belongs to the TRAFAC class translation factor GTPase superfamily. Classic translation factor GTPase family. EF-G/EF-2 subfamily.

It localises to the cytoplasm. In terms of biological role, catalyzes the GTP-dependent ribosomal translocation step during translation elongation. During this step, the ribosome changes from the pre-translocational (PRE) to the post-translocational (POST) state as the newly formed A-site-bound peptidyl-tRNA and P-site-bound deacylated tRNA move to the P and E sites, respectively. Catalyzes the coordinated movement of the two tRNA molecules, the mRNA and conformational changes in the ribosome. The sequence is that of Elongation factor G from Alkalilimnicola ehrlichii (strain ATCC BAA-1101 / DSM 17681 / MLHE-1).